The chain runs to 451 residues: Gamma-aminobutyric acid receptor subunit alpha-2 (451 aa).

A signal peptide spans 1-28; it reads MKTKLNIYNMQLLLFVFLVWDPARLVLA. Over 29-249 the chain is Extracellular; the sequence is NIQEDEAKNN…MTAHFHLKRK (221 aa). A glycan (N-linked (GlcNAc...) asparagine) is linked at asparagine 38. Arginine 94 provides a ligand contact to 4-aminobutanoate. Asparagine 138 is a glycosylation site (N-linked (GlcNAc...) asparagine). Position 157 (threonine 157) interacts with 4-aminobutanoate. A disulfide bridge links cysteine 166 with cysteine 180. The helical transmembrane segment at 250–270 threads the bilayer; it reads IGYFVIQTYLPCIMTVILSQV. The Cytoplasmic portion of the chain corresponds to 271–280; the sequence is SFWLNRESVP. Residues 281–300 form a helical membrane-spanning segment; the sequence is ARTVFGVTTVLTMTTLSISA. The Extracellular segment spans residues 301–311; that stretch reads RNSLPKVAYAT. A helical membrane pass occupies residues 312–332; sequence AMDWFIAVCYAFVFSALIEFA. Residues 333–420 lie on the Cytoplasmic side of the membrane; that stretch reads TVNYFTKRGW…FNSVSKIDRM (88 aa). A helical transmembrane segment spans residues 421 to 441; it reads SRIVFPVLFGTFNLVYWATYL. Residues 442–451 are Extracellular-facing; that stretch reads NREPVLGVSP.

It belongs to the ligand-gated ion channel (TC 1.A.9) family. Gamma-aminobutyric acid receptor (TC 1.A.9.5) subfamily. GABRA2 sub-subfamily. Heteropentamer, formed by a combination of alpha (GABRA1-6), beta (GABRB1-3), gamma (GABRG1-3), delta (GABRD), epsilon (GABRE), rho (GABRR1-3), pi (GABRP) and theta (GABRQ) subunits, each subunit exhibiting distinct physiological and pharmacological properties. Interacts with UBQLN1. Interacts with KIF21B. Interacts with LHFPL4. Interacts with SHISA7; interaction leads to the regulation of GABA(A) receptor trafficking, channel deactivation kinetics and pharmacology. Glycosylated.

Its subcellular location is the postsynaptic cell membrane. It is found in the cell membrane. The protein resides in the cytoplasmic vesicle membrane. It localises to the cell projection. The protein localises to the dendrite. It catalyses the reaction chloride(in) = chloride(out). Activated by pentobarbital. Inhibited by the antagonist bicuculline. Alpha subunit of the heteropentameric ligand-gated chloride channel gated by gamma-aminobutyric acid (GABA), a major inhibitory neurotransmitter in the brain. GABA-gated chloride channels, also named GABA(A) receptors (GABAAR), consist of five subunits arranged around a central pore and contain GABA active binding site(s) located at the alpha and beta subunit interface(s). When activated by GABA, GABAARs selectively allow the flow of chloride anions across the cell membrane down their electrochemical gradient. Chloride influx into the postsynaptic neuron following GABAAR opening decreases the neuron ability to generate a new action potential, thereby reducing nerve transmission. The alpha-2 subunit exhibits synaptogenic activity together with beta-2 and very little to no activity together with beta-3, the gamma-2 subunit being necessary but not sufficient to induce rapid synaptic contacts formation. The sequence is that of Gamma-aminobutyric acid receptor subunit alpha-2 (GABRA2) from Pongo abelii (Sumatran orangutan).